Reading from the N-terminus, the 188-residue chain is PRA1 family protein 3 (188 aa).

Position 1 is an N-acetylmethionine (Met1). The Cytoplasmic segment spans residues Met1–Arg35. The next 2 membrane-spanning stretches (helical) occupy residues Val36–Ser56 and Val57–Phe77. Topologically, residues Thr78–Met93 are cytoplasmic. A run of 2 helical transmembrane segments spans residues Lys94–Ser114 and Leu115–Ile135. Residues Met103 to Gly117 form a required for homodimer formation and heterodimer formation with ARL6IP1 region. Residues His136–Glu188 are Cytoplasmic-facing. The targeting to endoplasmic reticulum membrane stretch occupies residues His136–Glu188.

Belongs to the PRA1 family. In terms of assembly, homodimer. Heterodimer with ARL6IP1. Forms multimers. Interacts with ARL6. Interacts with prenylated RAB1A and RAB3A. Interacts with SLC1A1/EAAC1. Interacts with RTN2 (via first transmembrane domain). Does not interact with VAMP1, VAMP2 or VAMP3.

The protein localises to the endoplasmic reticulum membrane. The protein resides in the cell membrane. It is found in the cytoplasm. It localises to the cytoskeleton. Its function is as follows. Regulates intracellular concentrations of taurine and glutamate. Negatively modulates SLC1A1/EAAC1 glutamate transport activity by decreasing its affinity for glutamate in a PKC activity-dependent manner. Plays a role in the retention of SLC1A1/EAAC1 in the endoplasmic reticulum. The polypeptide is PRA1 family protein 3 (ARL6IP5) (Bos taurus (Bovine)).